The following is a 348-amino-acid chain: Nicotinate-nucleotide pyrophosphorylase [carboxylating], chloroplastic (348 aa).

A chloroplast-targeting transit peptide spans 1–41; sequence MISVSRFLSPQFYAIPRSFVKMSASATQTAGEVSMGIKPPS. Residues Arg-139, 170-172, Arg-194, Lys-204, Glu-237, Asp-264, 296-298, and 317-319 each bind substrate; these read TRK, SGN, and SGA.

The protein belongs to the NadC/ModD family.

It localises to the plastid. It is found in the chloroplast. The enzyme catalyses nicotinate beta-D-ribonucleotide + CO2 + diphosphate = quinolinate + 5-phospho-alpha-D-ribose 1-diphosphate + 2 H(+). It functions in the pathway cofactor biosynthesis; NAD(+) biosynthesis; nicotinate D-ribonucleotide from quinolinate: step 1/1. In terms of biological role, involved in the biosynthesis of NAD(+). Catalyzes the conversion of quinolate to nicotinate to nicotinate beta-D-ribonucleotide. This chain is Nicotinate-nucleotide pyrophosphorylase [carboxylating], chloroplastic, found in Arabidopsis thaliana (Mouse-ear cress).